The chain runs to 542 residues: Excitatory amino acid transporter 1 (542 aa).

Topologically, residues 1 to 47 (MTKSNGEEPKMGGRMERFQQGVRKRTLLAKKKVQNITKEDVKSYLFR) are cytoplasmic. A helical membrane pass occupies residues 48–68 (NAFVLLTVTAVIVGTILGFTL). At 69-86 (RPYRMSYREVKYFSFPGE) the chain is on the extracellular side. Residues 87 to 108 (LLMRMLQMLVLPLIISSLVTGM) form a helical membrane-spanning segment. Residues 109–122 (AALDSKASGKMGMR) lie on the Cytoplasmic side of the membrane. The chain crosses the membrane as a helical span at residues 123–145 (AVVYYMTTTIIAVVIGIIIVIII). Residues 146–236 (HPGKGTKENM…ITEELVPVPG (91 aa)) lie on the Extracellular side of the membrane. Residues 237–260 (SVNGVNALGLVVFSMCFGFVIGNM) form a helical membrane-spanning segment. Residues 261 to 269 (KEQGQALRE) lie on the Cytoplasmic side of the membrane. A helical transmembrane segment spans residues 270–297 (FFDSLNEAIMRLVAVIMWYAPVGILFLI). Residues 298 to 318 (AGKIVEMEDMGVIGGQLAMYT) are Extracellular-facing. Residues 319–340 (VTVIVGLLIHAVIVLPLLYFLV) form a helical membrane-spanning segment. Topologically, residues 341–345 (TRKNP) are cytoplasmic. The discontinuously helical intramembrane region spans 346–376 (WVFIGGLLQALITALGTSSSSATLPITFKCL). 363–365 (SSS) is an L-aspartate binding site. Residues 377-385 (EENNGVDKR) are Cytoplasmic-facing. The chain crosses the membrane as a helical span at residues 386-412 (VTRFVLPVGATINMDGTALYEALAAIF). Positions 394, 396, and 398 each coordinate Na(+). Position 402 (Thr402) interacts with L-aspartate. The Extracellular segment spans residues 413–425 (IAQVNNFELNFGQ). The discontinuously helical intramembrane region spans 426–459 (IITISITATAASIGAAGIPQAGLVTMVIVLTSVG). 443–447 (IPQAG) is a binding site for L-aspartate. The Extracellular portion of the chain corresponds to 460–472 (LPTDDITLIIAVD). Residues 473–494 (WFLDRLRTTTNVLGDSLGAGIV) form a helical membrane-spanning segment. L-aspartate-binding residues include Asp476 and Asn483. Residues Asn483 and Asp487 each coordinate Na(+). Residues 495 to 542 (EHLSRHELKNRDVEMGNSVIEENEMKKPYQLIAQDNETEKPIDSETKM) are Cytoplasmic-facing. Ser512 is subject to Phosphoserine.

The protein belongs to the dicarboxylate/amino acid:cation symporter (DAACS) (TC 2.A.23) family. SLC1A3 subfamily. In terms of assembly, homotrimer. Post-translationally, glycosylated. As to expression, detected in brain. Detected at very much lower levels in heart, lung, placenta and skeletal muscle. Highly expressed in cerebellum, but also found in frontal cortex, hippocampus and basal ganglia.

The protein localises to the cell membrane. The enzyme catalyses K(+)(in) + L-glutamate(out) + 3 Na(+)(out) + H(+)(out) = K(+)(out) + L-glutamate(in) + 3 Na(+)(in) + H(+)(in). It carries out the reaction K(+)(in) + L-aspartate(out) + 3 Na(+)(out) + H(+)(out) = K(+)(out) + L-aspartate(in) + 3 Na(+)(in) + H(+)(in). It catalyses the reaction D-aspartate(out) + K(+)(in) + 3 Na(+)(out) + H(+)(out) = D-aspartate(in) + K(+)(out) + 3 Na(+)(in) + H(+)(in). Functionally, sodium-dependent, high-affinity amino acid transporter that mediates the uptake of L-glutamate and also L-aspartate and D-aspartate. Functions as a symporter that transports one amino acid molecule together with two or three Na(+) ions and one proton, in parallel with the counter-transport of one K(+) ion. Mediates Cl(-) flux that is not coupled to amino acid transport; this avoids the accumulation of negative charges due to aspartate and Na(+) symport. Plays a redundant role in the rapid removal of released glutamate from the synaptic cleft, which is essential for terminating the postsynaptic action of glutamate. This Homo sapiens (Human) protein is Excitatory amino acid transporter 1.